Here is a 607-residue protein sequence, read N- to C-terminus: UvrABC system protein C (607 aa).

The GIY-YIG domain maps to Gly16 to Ile94. In terms of domain architecture, UVR spans Asn203–Val238.

This sequence belongs to the UvrC family. As to quaternary structure, interacts with UvrB in an incision complex.

It localises to the cytoplasm. Functionally, the UvrABC repair system catalyzes the recognition and processing of DNA lesions. UvrC both incises the 5' and 3' sides of the lesion. The N-terminal half is responsible for the 3' incision and the C-terminal half is responsible for the 5' incision. This chain is UvrABC system protein C, found in Ectopseudomonas mendocina (strain ymp) (Pseudomonas mendocina).